A 294-amino-acid chain; its full sequence is MLENLSTEHRNEKTMNLDEMNIKEVLQSMNEEDRTVALAVEKEIEHIEKVVRVVIQSFEEEGRLIYIGAGTSGRLGILDAVECPPTFGTDDKMVQGFIAGGLKAFTKAVEGAEDREELAEEDLKSIGLNEKDTVIGIAASGRTPYVIGGLKYANSVGASTASISCNKNAEISKYAKLNVEVETGAEILTGSTRLKAGTAQKLVLNMISTASMIGVGKVYKNLMVDVQSTNEKLVERSKRIIVEATGASYEVAAEYYEKAERNVKAAIVMVLLQCEYGEALEKLKEAKGFVKKAL.

The SIS domain occupies 54-217 (VIQSFEEEGR…STASMIGVGK (164 aa)). Glu-82 acts as the Proton donor in catalysis. The active site involves Glu-113.

Belongs to the GCKR-like family. MurNAc-6-P etherase subfamily. Homodimer.

It catalyses the reaction N-acetyl-D-muramate 6-phosphate + H2O = N-acetyl-D-glucosamine 6-phosphate + (R)-lactate. It functions in the pathway amino-sugar metabolism; N-acetylmuramate degradation. Its function is as follows. Specifically catalyzes the cleavage of the D-lactyl ether substituent of MurNAc 6-phosphate, producing GlcNAc 6-phosphate and D-lactate. This chain is N-acetylmuramic acid 6-phosphate etherase, found in Bacillus cereus (strain 03BB102).